We begin with the raw amino-acid sequence, 449 residues long: MSFTPGKQSSSRASSGNRSGNGILKWADQSDQSRNVQTRGRRVQSKQTATSQQPSGGTVVPYYSWFSGITQFQKGKEFEFAEGQGVPIAPGVPSTEAKGYWYRHNRRSFKTADGNQRQLLPRWYFYYLGTGPHAKDQYGTDIDGVFWVASNQADINTPADIVDRDPSSDEAIPTRFPPGTVLPQGYYIEGSGRSAPNSRSTSRAPNRAPSAGSRSRANSGNRTSTPGVTPDMADQIASLVLAKLGKDATKPQQVTKQTAKEVRQKILNKPRQKRSPNKQCTVQQCFGKRGPNQNFGGGEMLKLGTSDPQFPILAELAPTAGAFFFGSRLELAKVQNLSGNPDEPQKDVYELRYNGAIRFDSTLSGFETIMKVLNQNLNAYQHQEDGMMNISPKPQRQRGQKNGQVENDNVSVAAPKSRVQQNKSRELTAEDISLLKKMDEPYTEDTSEI.

The segment at 1 to 55 is disordered; sequence MSFTPGKQSSSRASSGNRSGNGILKWADQSDQSRNVQTRGRRVQSKQTATSQQPS. Over residues 9–22 the composition is skewed to low complexity; sequence SSSRASSGNRSGNG. Composition is skewed to polar residues over residues 29–38 and 45–55; these read QSDQSRNVQT and SKQTATSQQPS. Residues 52–194 are RNA-binding; sequence QQPSGGTVVP…GYYIEGSGRS (143 aa). Residues 61–190 enclose the CoV N NTD domain; it reads PYYSWFSGIT…VLPQGYYIEG (130 aa). 3 residues coordinate RNA: arginine 106, arginine 122, and arginine 164. Disordered regions lie at residues 158 to 231, 266 to 297, and 387 to 449; these read PADI…VTPD, ILNK…NFGG, and MMNI…TSEI. Phosphoserine; by host is present on serine 167. Phosphothreonine; by host is present on threonine 174. Serine 191 bears the Phosphoserine; by host mark. Composition is skewed to polar residues over residues 194-204 and 212-227; these read SAPNSRSTSRA and GSRS…STPG. Residues 259–384 form the CoV N CTD domain; the sequence is AKEVRQKILN…QNLNAYQHQE (126 aa). A compositionally biased stretch (basic residues) spans 266–276; sequence ILNKPRQKRSP. The segment at 266-385 is dimerization; that stretch reads ILNKPRQKRS…NLNAYQHQED (120 aa). Serine 391 is subject to Phosphoserine; by host. The segment covering 400–410 has biased composition (polar residues); that stretch reads QKNGQVENDNV. The span at 423-440 shows a compositional bias: basic and acidic residues; the sequence is KSRELTAEDISLLKKMDE. Phosphoserine; by host is present on serine 424. Threonine 428 is subject to Phosphothreonine; by host.

Belongs to the betacoronavirus nucleocapsid protein family. In terms of assembly, homooligomer. Both monomeric and oligomeric forms interact with RNA. Interacts with protein M. Interacts with NSP3; this interaction serves to tether the genome to the newly translated replicase-transcriptase complex at a very early stage of infection. ADP-ribosylated. The ADP-ribosylation is retained in the virion during infection. Post-translationally, phosphorylated on serine and threonine residues.

The protein resides in the virion. The protein localises to the host endoplasmic reticulum-Golgi intermediate compartment. It is found in the host Golgi apparatus. Functionally, packages the positive strand viral genome RNA into a helical ribonucleocapsid (RNP) and plays a fundamental role during virion assembly through its interactions with the viral genome and membrane protein M. Plays an important role in enhancing the efficiency of subgenomic viral RNA transcription as well as viral replication. The protein is Nucleoprotein of Sus scrofa (Pig).